A 237-amino-acid chain; its full sequence is MRPSGRKLDQMRSVSIEPNVMKHAEGSCLIRMGETHVLCSASIEDKPPPFLKNTGLGWVTAEYGMLPRATTSRNRREATAGKQSGRTQEIQRLIGRALRAGIDRSALGERQIVIDCDVLQADGGTRCASITGGWVALRLAVNKLLKAGIVVSDPIVDHVAAVSCGIYAGQPVLDLDYAEDSTAGTDGNFVLTGRQRLIEVQMSAEGASFSRDEMGQLLDLAEAGIADLVAAQKAALG.

Residues Arg-86 and 124–126 (GTR) each bind phosphate.

This sequence belongs to the RNase PH family. As to quaternary structure, homohexameric ring arranged as a trimer of dimers.

It catalyses the reaction tRNA(n+1) + phosphate = tRNA(n) + a ribonucleoside 5'-diphosphate. In terms of biological role, phosphorolytic 3'-5' exoribonuclease that plays an important role in tRNA 3'-end maturation. Removes nucleotide residues following the 3'-CCA terminus of tRNAs; can also add nucleotides to the ends of RNA molecules by using nucleoside diphosphates as substrates, but this may not be physiologically important. Probably plays a role in initiation of 16S rRNA degradation (leading to ribosome degradation) during starvation. The protein is Ribonuclease PH of Cereibacter sphaeroides (strain ATCC 17025 / ATH 2.4.3) (Rhodobacter sphaeroides).